The primary structure comprises 116 residues: Putative pterin-4-alpha-carbinolamine dehydratase (116 aa).

This sequence belongs to the pterin-4-alpha-carbinolamine dehydratase family.

It catalyses the reaction (4aS,6R)-4a-hydroxy-L-erythro-5,6,7,8-tetrahydrobiopterin = (6R)-L-erythro-6,7-dihydrobiopterin + H2O. The chain is Putative pterin-4-alpha-carbinolamine dehydratase from Xylella fastidiosa (strain M23).